The chain runs to 144 residues: Large ribosomal subunit protein uL15 (144 aa).

A disordered region spans residues 1-45 (MNLNTLSPDPGSRPSRRRVGRGIGSGLGKTCGKGHKGQKSRAGGY). The span at 21–31 (RGIGSGLGKTC) shows a compositional bias: gly residues.

The protein belongs to the universal ribosomal protein uL15 family. As to quaternary structure, part of the 50S ribosomal subunit.

Its function is as follows. Binds to the 23S rRNA. This chain is Large ribosomal subunit protein uL15, found in Legionella pneumophila (strain Paris).